Reading from the N-terminus, the 554-residue chain is Beta-eudesmol synthase (554 aa).

The Mg(2+) site is built by Asp-305, Asp-309, and Glu-456. Positions 305-309 (DDIYD) match the DDXXD motif motif.

It belongs to the terpene synthase family. Mg(2+) serves as cofactor. The cofactor is Mn(2+). Expressed in rhizomes. Detected in stems, but not in leaves.

The protein localises to the cytoplasm. It catalyses the reaction (2E,6E)-farnesyl diphosphate + H2O = beta-eudesmol + diphosphate. The enzyme catalyses (2E,6E)-farnesyl diphosphate + H2O = 10-epi-gamma-eudesmol + diphosphate. It carries out the reaction (2E,6E)-farnesyl diphosphate + H2O = alpha-eudesmol + diphosphate. It functions in the pathway secondary metabolite biosynthesis; terpenoid biosynthesis. Functionally, involved in the biosynthesis of beta-eudesmol, a sesquiterpene with antifungal activity and responsible for resistance of plants to ant attack. Produces mainly beta-eudesmol, but also smaller amounts of 10-epi-gamma-eudesmol, alpha-eudesmol and aristolene. The protein is Beta-eudesmol synthase (ZSS2) of Zingiber zerumbet (Shampoo ginger).